A 539-amino-acid polypeptide reads, in one-letter code: AT-rich interactive domain-containing protein 3A (539 aa).

The disordered stretch occupies residues methionine 1–aspartate 190. The span at leucine 55–alanine 73 shows a compositional bias: low complexity. Positions serine 84–lysine 100 are enriched in acidic residues. The span at glutamate 101 to glutamine 110 shows a compositional bias: basic and acidic residues. Residues alanine 113–glutamate 141 show a composition bias toward acidic residues. The segment covering histidine 161–glutamine 173 has biased composition (polar residues). Positions aspartate 209–arginine 301 constitute an ARID domain. Positions alanine 404–serine 499 constitute an REKLES domain. An important for nuclear localization region spans residues alanine 405–glutamine 448. Positions proline 450–threonine 471 are homodimerization. Positions glutamine 495–glycine 502 are important for cytoplasmic localization. Over residues proline 497–glycine 512 the composition is skewed to polar residues. The segment at proline 497 to proline 539 is disordered. Over residues serine 519–proline 539 the composition is skewed to low complexity.

Homodimer.

It localises to the nucleus. The protein resides in the cytoplasm. Transcription factor required for smad1 and smad2-mediated responses to TGFbeta during mesoderm induction. The polypeptide is AT-rich interactive domain-containing protein 3A (arid3a) (Xenopus laevis (African clawed frog)).